The chain runs to 434 residues: MKPSKHLIFALFALAISQPTMAAPQPLDRVAVQINDGIVLESEITNMIDTVKANAKAANQSLPSDSALRTQVIERLILTRLQLQMADRIGLHIGDLQLDQAIENIAREQKMTVAQMQQKIASEGISFSQYREQLREEITLGEIQRIQVQRRIQVSPQEITGLVKLIQEQGMKDVEYQIGHILIDVPNNPTSEQLEASSKRANAVLERLKSGEDFRRTAIASSSGPKALEGGIWDYMNINEMPTLFAEVINGAKKGDIIGPIKTGAGFHIIKIMDARGLQTKEIEEVRARHILLKPSPILSEDRAKAMLEQFLKQIRSGEAKFEDLARQYSEDPGSATKGGELGWAEPSIYVPEFAQTLNSLSPDQISEPFRTTHGWHITQLEERRKTDATDQFNTNRAHQLIFRRKFNEELQNWLDEMRADAYIEVFQPESNRG.

An N-terminal signal peptide occupies residues 1-22 (MKPSKHLIFALFALAISQPTMA). 2 PpiC domains span residues 173 to 274 (DVEY…KIMD) and 283 to 383 (IEEV…QLEE).

It is found in the periplasm. It catalyses the reaction [protein]-peptidylproline (omega=180) = [protein]-peptidylproline (omega=0). Functionally, chaperone involved in the correct folding and assembly of outer membrane proteins. Recognizes specific patterns of aromatic residues and the orientation of their side chains, which are found more frequently in integral outer membrane proteins. May act in both early periplasmic and late outer membrane-associated steps of protein maturation. In Shewanella oneidensis (strain ATCC 700550 / JCM 31522 / CIP 106686 / LMG 19005 / NCIMB 14063 / MR-1), this protein is Chaperone SurA.